The chain runs to 110 residues: Large ribosomal subunit protein uL22 (110 aa).

This sequence belongs to the universal ribosomal protein uL22 family. Part of the 50S ribosomal subunit.

This protein binds specifically to 23S rRNA; its binding is stimulated by other ribosomal proteins, e.g. L4, L17, and L20. It is important during the early stages of 50S assembly. It makes multiple contacts with different domains of the 23S rRNA in the assembled 50S subunit and ribosome. In terms of biological role, the globular domain of the protein is located near the polypeptide exit tunnel on the outside of the subunit, while an extended beta-hairpin is found that lines the wall of the exit tunnel in the center of the 70S ribosome. This Syntrophotalea carbinolica (strain DSM 2380 / NBRC 103641 / GraBd1) (Pelobacter carbinolicus) protein is Large ribosomal subunit protein uL22.